Reading from the N-terminus, the 263-residue chain is 3-deoxy-manno-octulosonate cytidylyltransferase 2 (263 aa).

This sequence belongs to the KdsB family.

The protein resides in the cytoplasm. The enzyme catalyses 3-deoxy-alpha-D-manno-oct-2-ulosonate + CTP = CMP-3-deoxy-beta-D-manno-octulosonate + diphosphate. The protein operates within nucleotide-sugar biosynthesis; CMP-3-deoxy-D-manno-octulosonate biosynthesis; CMP-3-deoxy-D-manno-octulosonate from 3-deoxy-D-manno-octulosonate and CTP: step 1/1. It functions in the pathway bacterial outer membrane biogenesis; lipopolysaccharide biosynthesis. In terms of biological role, activates KDO (a required 8-carbon sugar) for incorporation into bacterial lipopolysaccharide in Gram-negative bacteria. The protein is 3-deoxy-manno-octulosonate cytidylyltransferase 2 of Paraburkholderia phytofirmans (strain DSM 17436 / LMG 22146 / PsJN) (Burkholderia phytofirmans).